The following is a 785-amino-acid chain: MEKKYKNIVLLKGLEVINDYHFRMVKSLLSNDLKLNLKMREEYDKIQIADLMEEKFRGDAGLGKLIQIFKDIPTLEDLAETLKKEKLKAKGLAPSRKRKKEVDAASPAPSTSSTVKTEGAEATPGAQKRKKTTKEKSGPKGSKVSKEQTQPPCPAGAGMSTAMGRSPSPKTSSSAPPNTSSTENPKTVAKCQATPRRSVLQKGPVIVKVLSTTKPFEYETPEMEKKIMFHATVATQTQFFHVKVLNTSLKEKFNGKKIIIISDYLEYDSLLEVNEESTVSEAGPNQKFEVPNKIINRAKETLKIDILHKQASGNIVYGVFTLHKKTVNQKTTIYKIQDDRGKMDVVGTGQCHNIPCEEGDKLQLYCFRLRKKNQMSTLISEMHSFIQIKKKTNPRNNDPKSMKLPQEQSQLPNPSEAGTTFPESHLWTPQMPPTTPSSSFFTKKSEDTISKMNDFMRMQILKEESHFPGPFMTSIGPAESYPHTPQMPPSTPSSSFLTTKSEDTISKMNDFMRMQILKEESHFPRPFMTSIGPAESYPHTPQMPPSTPSSSFLTTWKPKLQTEPEEVSIEDSAQSDLKEVMVLNATESFVYEPKEQKKMFHATVATEKEVFRVKVFNIDLKEKFTPKKIIAISNYVCRNGFLEVYPFTLVADVNADPKMEIPKGLIRSANITPKINQLCSQTKGSFVNGVFEVHKKNVRGEFTYYEIQDNTGKMEVVVHGRLTTINCEEGDKLKLTCFELAPKSGNTGELRSVIHSHIKVIKTRKNKKDILNPDSSMETSPDFFF.

The Pyrin domain maps to 5 to 92 (YKNIVLLKGL…KKEKLKAKGL (88 aa)). An N6-acetyllysine modification is found at lysine 45. Residues 88 to 99 (KAKGLAPSRKRK) show a composition bias toward basic residues. The disordered stretch occupies residues 88–196 (KAKGLAPSRK…TVAKCQATPR (109 aa)). Phosphoserine is present on serine 95. The Nuclear localization signal motif lies at 96-100 (RKRKK). Lysine 99 carries the N6-acetyllysine modification. Low complexity predominate over residues 104 to 114 (AASPAPSTSST). Serine 106 carries the phosphoserine modification. Residue lysine 116 forms a Glycyl lysine isopeptide (Lys-Gly) (interchain with G-Cter in SUMO2) linkage. Position 128 is an N6-acetyllysine; alternate (lysine 128). Lysine 128 participates in a covalent cross-link: Glycyl lysine isopeptide (Lys-Gly) (interchain with G-Cter in SUMO2); alternate. Short sequence motifs (nuclear localization signal) lie at residues 128 to 131 (KRKK), 134 to 136 (KEK), and 140 to 143 (KGSK). Residues 166–182 (SPSPKTSSSAPPNTSST) are compositionally biased toward low complexity. Residues serine 168 and serine 174 each carry the phosphoserine modification. The interaction with TP53 C-terminus stretch occupies residues 192–393 (QATPRRSVLQ…SFIQIKKKTN (202 aa)). The HIN-200 1 domain occupies 193-393 (ATPRRSVLQK…SFIQIKKKTN (201 aa)). Lysine 214 is modified (N6-acetyllysine). The interval 388 to 442 (IKKKTNPRNNDPKSMKLPQEQSQLPNPSEAGTTFPESHLWTPQMPPTTPSSSFFT) is disordered. Residues 406–422 (QEQSQLPNPSEAGTTFP) are compositionally biased toward polar residues. Lysine 444 and lysine 451 each carry N6-acetyllysine. One can recognise an HIN-200 2 domain in the interval 566–765 (EVSIEDSAQS…SHIKVIKTRK (200 aa)). The interval 571–766 (DSAQSDLKEV…HIKVIKTRKN (196 aa)) is interaction with TP53 core domain. Serine 575 is modified (phosphoserine). An N6-acetyllysine mark is found at lysine 598 and lysine 614. A Glycyl lysine isopeptide (Lys-Gly) (interchain with G-Cter in SUMO2) cross-link involves residue lysine 683. Serine 780 bears the Phosphoserine mark.

Belongs to the HIN-200 family. Forms homooligomers. Interacts with TMEM173, AIM2, PYCARD and CASP1. Interacts with BRCA1, TP53, E2F1, RB1 and SP1. Interacts with MTA1. Interacts with MTA1. Interacts with PYDC5. In terms of processing, lysine acetylation in the multipartite nuclear localization signal (NLS) regulates the subcellular location. Post-translationally, phosphorylated on Ser and Thr.

The protein localises to the nucleus. It is found in the cytoplasm. Functionally, binds double-stranded DNA. Binds preferentially to supercoiled DNA and cruciform DNA structures. Seems to be involved in transcriptional regulation. May function as a transcriptional repressor. Could have a role in the regulation of hematopoietic differentiation through activation of unknown target genes. Controls cellular proliferation by modulating the functions of cell cycle regulatory factors including p53/TP53 and the retinoblastoma protein. May be involved in TP53-mediated transcriptional activation by enhancing TP53 sequence-specific DNA binding and modulating TP53 phosphorylation status. Seems to be involved in energy-level-dependent activation of the ATM/ AMPK/TP53 pathway coupled to regulation of autophagy. May be involved in regulation of TP53-mediated cell death also involving BRCA1. May be involved in the senescence of prostate epithelial cells. Involved in innate immune response by recognizing viral dsDNA in the cytosol and probably in the nucleus. After binding to viral DNA in the cytoplasm recruits TMEM173/STING and mediates the induction of IFN-beta. Has anti-inflammatory activity and inhibits the activation of the AIM2 inflammasome, probably via association with AIM2. Proposed to bind viral DNA in the nucleus and to induce the formation of nuclear caspase-1-activating inflammasome formation via association with PYCARD. Inhibits replication of herpesviruses probably by interfering with promoter recruitment of members of the Sp1 family of transcription factors. The protein is Gamma-interferon-inducible protein 16 (IFI16) of Pongo abelii (Sumatran orangutan).